The primary structure comprises 170 residues: Crossover junction endodeoxyribonuclease RuvC (170 aa).

Active-site residues include Asp-12, Glu-72, and Asp-144. Mg(2+)-binding residues include Asp-12, Glu-72, and Asp-144.

Belongs to the RuvC family. In terms of assembly, homodimer which binds Holliday junction (HJ) DNA. The HJ becomes 2-fold symmetrical on binding to RuvC with unstacked arms; it has a different conformation from HJ DNA in complex with RuvA. In the full resolvosome a probable DNA-RuvA(4)-RuvB(12)-RuvC(2) complex forms which resolves the HJ. It depends on Mg(2+) as a cofactor.

It is found in the cytoplasm. The enzyme catalyses Endonucleolytic cleavage at a junction such as a reciprocal single-stranded crossover between two homologous DNA duplexes (Holliday junction).. In terms of biological role, the RuvA-RuvB-RuvC complex processes Holliday junction (HJ) DNA during genetic recombination and DNA repair. Endonuclease that resolves HJ intermediates. Cleaves cruciform DNA by making single-stranded nicks across the HJ at symmetrical positions within the homologous arms, yielding a 5'-phosphate and a 3'-hydroxyl group; requires a central core of homology in the junction. The consensus cleavage sequence is 5'-(A/T)TT(C/G)-3'. Cleavage occurs on the 3'-side of the TT dinucleotide at the point of strand exchange. HJ branch migration catalyzed by RuvA-RuvB allows RuvC to scan DNA until it finds its consensus sequence, where it cleaves and resolves the cruciform DNA. The sequence is that of Crossover junction endodeoxyribonuclease RuvC from Nitrobacter hamburgensis (strain DSM 10229 / NCIMB 13809 / X14).